The primary structure comprises 398 residues: Signal-regulatory protein beta-1 (398 aa).

An N-terminal signal peptide occupies residues 1–29; sequence MPVPASWPHLPSPFLLMTLLLGRLTGVAG. Residues 30–136 form the Ig-like V-type domain; that stretch reads EDELQVIQPE…SPDDVEFKSG (107 aa). At 30–371 the chain is on the extracellular side; the sequence is EDELQVIQPE…EAALAPTAPL (342 aa). Intrachain disulfides connect Cys-54/Cys-120 and Cys-169/Cys-227. Ig-like C1-type domains follow at residues 147–246 and 253–347; these read PSAP…ANLS and PTLE…YALE. 3 N-linked (GlcNAc...) asparagine glycosylation sites follow: Asn-244, Asn-269, and Asn-291. The chain crosses the membrane as a helical span at residues 372 to 392; that stretch reads LVALLLGPKLLLVVGVSAIYI. Over 393–398 the chain is Cytoplasmic; the sequence is CWKQKA.

In terms of assembly, homodimer; disulfide-linked. Interacts with TYROBP. This interaction results in the recruitment of SYK. Post-translationally, N-glycosylated. Detected in monocytes and dendritic cells.

The protein resides in the cell membrane. Immunoglobulin-like cell surface receptor involved in the negative regulation of receptor tyrosine kinase-coupled signaling processes. Also participates in the recruitment of tyrosine kinase SYK. Triggers activation of myeloid cells when associated with TYROBP. This is Signal-regulatory protein beta-1 (SIRPB1) from Homo sapiens (Human).